The sequence spans 225 residues: Uracil-DNA glycosylase (225 aa).

D65 (proton acceptor) is an active-site residue.

This sequence belongs to the uracil-DNA glycosylase (UDG) superfamily. UNG family.

It is found in the cytoplasm. The catalysed reaction is Hydrolyzes single-stranded DNA or mismatched double-stranded DNA and polynucleotides, releasing free uracil.. Its function is as follows. Excises uracil residues from the DNA which can arise as a result of misincorporation of dUMP residues by DNA polymerase or due to deamination of cytosine. The polypeptide is Uracil-DNA glycosylase (Bacillus cereus (strain ATCC 10987 / NRS 248)).